A 372-amino-acid chain; its full sequence is Serine/threonine-protein kinase 17B (372 aa).

Positions 33 to 293 (ILTSKELGRG…AEICLSHSWL (261 aa)) constitute a Protein kinase domain. ATP contacts are provided by residues 39-47 (LGRGKFAVV) and K62. D158 serves as the catalytic Proton acceptor. Positions 305–362 (EETSSSSQTQDHSVRSSEDKTSKSSCNGTCGDREDKENIPEDSSMVSKRFRFDDSLPN) are disordered. Residues 316 to 326 (HSVRSSEDKTS) show a composition bias toward basic and acidic residues.

This sequence belongs to the protein kinase superfamily. CAMK Ser/Thr protein kinase family. DAP kinase subfamily. In terms of assembly, interacts with CHP1; the interaction induces CHP1 to translocate from the Golgi to the nucleus. Autophosphorylated. Highly expressed in placenta, lung, pancreas. Lower levels in heart, brain, liver, skeletal muscle and kidney.

The protein localises to the nucleus. It is found in the cell membrane. Its subcellular location is the endoplasmic reticulum-Golgi intermediate compartment. It carries out the reaction L-seryl-[protein] + ATP = O-phospho-L-seryl-[protein] + ADP + H(+). It catalyses the reaction L-threonyl-[protein] + ATP = O-phospho-L-threonyl-[protein] + ADP + H(+). Functionally, phosphorylates myosin light chains. Acts as a positive regulator of apoptosis. In Homo sapiens (Human), this protein is Serine/threonine-protein kinase 17B (STK17B).